A 230-amino-acid polypeptide reads, in one-letter code: Demethylluteothin O-methyltransferase (230 aa).

Belongs to the methyltransferase superfamily.

The enzyme catalyses demethylluteothin + S-adenosyl-L-methionine = luteothin + S-adenosyl-L-homocysteine. It participates in antibiotic biosynthesis. The protein operates within polyketide biosynthesis. Its function is as follows. Methyltransferase involved in the biosynthesis of the antibiotic aureothin, a nitroaryl polyketide metabolite with antifungal, cytotoxic and insecticidal activities. Catalyzes the methylation of demethylluteothin to luteothin (also called deoxyaureothin). Is specific for its gamma-pyrone substrate, and does not act on the alpha-pyrone isomer. The chain is Demethylluteothin O-methyltransferase from Streptomyces thioluteus.